The sequence spans 397 residues: Acetate kinase 2 (397 aa).

Asparagine 10 provides a ligand contact to Mg(2+). Lysine 17 is a binding site for ATP. Arginine 90 serves as a coordination point for substrate. Aspartate 147 functions as the Proton donor/acceptor in the catalytic mechanism. ATP is bound by residues 207–211, 281–283, and 329–333; these read HLGNG, DAR, and GIGEN. Glutamate 385 provides a ligand contact to Mg(2+).

It belongs to the acetokinase family. As to quaternary structure, homodimer. It depends on Mg(2+) as a cofactor. Mn(2+) is required as a cofactor.

It is found in the cytoplasm. It carries out the reaction acetate + ATP = acetyl phosphate + ADP. It functions in the pathway metabolic intermediate biosynthesis; acetyl-CoA biosynthesis; acetyl-CoA from acetate: step 1/2. Its function is as follows. Catalyzes the formation of acetyl phosphate from acetate and ATP. Can also catalyze the reverse reaction. This chain is Acetate kinase 2, found in Vibrio cholerae serotype O1 (strain ATCC 39315 / El Tor Inaba N16961).